Reading from the N-terminus, the 317-residue chain is U5 small nuclear ribonucleoprotein TSSC4 (317 aa).

A compositionally biased stretch (acidic residues) spans 1–19; it reads MAETEAGLEVEEPTEDDTL. The interval 1–78 is disordered; it reads MAETEAGLEV…IPTTAVQPFH (78 aa). Residues 20–37 show a composition bias toward low complexity; the sequence is PSDTVSLSDSDSDLSLPS. Phosphoserine occurs at positions 57, 64, 83, and 92. A hom2; mediates interaction with the U5 snRNP complexes and required for spliceosomal tri-snRNP complex assembly region spans residues 74–101; it reads VQPFHLRGMSSTFSQRSHSIFDCLESAA. The disordered stretch occupies residues 123-151; that stretch reads VAPPSQTPARSLSRVHGNTDPTRVHPVPD. The tract at residues 146–300 is interaction with SNRNP200; it reads VHPVPDYVSH…SKKRSRDHFR (155 aa). The segment at 147–183 is hom3; mediates interaction with the U5 snRNP complexes; it reads HPVPDYVSHPERWTKYSLEDVSETSEQSNRDAALAFL. Residues 198–238 form a hom4; necessary for interaction with the PRPF19 complex and required for spliceosomal tri-snRNP complex assembly region; the sequence is FNQDPSSCGEGRVVFTKPVRGSEARAERKRVLKKGVVSGAG. Lys-214 is subject to N6-acetyllysine. Residues 247–317 form a disordered region; the sequence is HLAGPEAEEW…GPGSERGPSV (71 aa).

The protein belongs to the TSSC4 family. Interacts in a RNA-independent manner with distinct U5 snRNP-containing complexes, the mono-U5 snRNP and the post-splicing U5 snRNP-PRPF19 complex. Interacts with SNRNP200; the interaction is direct, excludes recruitment of C9ORF78 and WBP4 to SNRNP200 and negatively regulates its RNA helicase activity. Interacts with PRPF8; the interaction is direct.

The protein localises to the nucleus. The protein resides in the cytoplasm. In terms of biological role, protein associated with the U5 snRNP, during its maturation and its post-splicing recycling and which is required for spliceosomal tri-snRNP complex assembly in the nucleus. Has a molecular sequestering activity and transiently hinders SNRNP200 binding sites for constitutive splicing factors that intervene later during the assembly of the spliceosome and splicing. Together with its molecular sequestering activity, may also function as a molecular adapter and placeholder, coordinating the assembly of the U5 snRNP and its association with the U4/U6 di-snRNP. In Rattus norvegicus (Rat), this protein is U5 small nuclear ribonucleoprotein TSSC4.